Here is a 104-residue protein sequence, read N- to C-terminus: MFAVIKTGGKQYRVAADAVLTIEKLEAEAGATVEFTEVLVIGEGADAQFGAPFVKGAIVKAEVVEHNRGKKVIAFKKRRRQNSKRSRGHRQHHTVVRITDIVAA.

It belongs to the bacterial ribosomal protein bL21 family. As to quaternary structure, part of the 50S ribosomal subunit. Contacts protein L20.

In terms of biological role, this protein binds to 23S rRNA in the presence of protein L20. The protein is Large ribosomal subunit protein bL21 of Agrobacterium fabrum (strain C58 / ATCC 33970) (Agrobacterium tumefaciens (strain C58)).